The sequence spans 529 residues: Alkaline phosphatase, germ cell type (529 aa).

An N-terminal signal peptide occupies residues 1 to 18 (MWGACLLLLGLSLQVCPS). D60 contacts Mg(2+). D60 and S110 together coordinate Zn(2+). Residue S110 is the Phosphoserine intermediate of the active site. C139 and C201 are disulfide-bonded. N140 carries N-linked (GlcNAc...) asparagine glycosylation. Mg(2+) is bound at residue S173. E234 provides a ligand contact to Ca(2+). N-linked (GlcNAc...) asparagine glycans are attached at residues N267 and N277. Residues F287, E288, and D303 each coordinate Ca(2+). Residue E329 participates in Mg(2+) binding. 5 residues coordinate Zn(2+): D334, H338, D375, H376, and H450. Cysteines 485 and 492 form a disulfide. Residue S502 is the site of GPI-anchor amidated serine attachment. Residues 503-529 (AVSPGYMSTLLCLLAGKMLMLMAAAEP) constitute a propeptide, removed in mature form.

It belongs to the alkaline phosphatase family. Homodimer. The cofactor is Mg(2+). Requires Zn(2+) as cofactor. Ca(2+) is required as a cofactor. As to expression, embryo and testis.

Its subcellular location is the cell membrane. The enzyme catalyses a phosphate monoester + H2O = an alcohol + phosphate. Inhibited by L-leucine, EDTA and heat. In terms of biological role, alkaline phosphatase that can hydrolyze various phosphate compounds. This is Alkaline phosphatase, germ cell type (Alpg) from Mus musculus (Mouse).